Here is a 346-residue protein sequence, read N- to C-terminus: Holliday junction branch migration complex subunit RuvB (346 aa).

The segment at 1–182 (MTRVISGEPQ…FGIPIRLEFY (182 aa)) is large ATPase domain (RuvB-L). 9 residues coordinate ATP: leucine 21, arginine 22, glycine 63, lysine 66, threonine 67, threonine 68, arginine 172, tyrosine 182, and arginine 219. Threonine 67 is a binding site for Mg(2+). Positions 183 to 253 (TPAELRHVLQ…AAAMALARLE (71 aa)) are small ATPAse domain (RuvB-S). Residues 256–346 (ESGLDSLDRR…QAQGALFDEG (91 aa)) are head domain (RuvB-H). Positions 292, 311, and 316 each coordinate DNA.

The protein belongs to the RuvB family. As to quaternary structure, homohexamer. Forms an RuvA(8)-RuvB(12)-Holliday junction (HJ) complex. HJ DNA is sandwiched between 2 RuvA tetramers; dsDNA enters through RuvA and exits via RuvB. An RuvB hexamer assembles on each DNA strand where it exits the tetramer. Each RuvB hexamer is contacted by two RuvA subunits (via domain III) on 2 adjacent RuvB subunits; this complex drives branch migration. In the full resolvosome a probable DNA-RuvA(4)-RuvB(12)-RuvC(2) complex forms which resolves the HJ.

The protein localises to the cytoplasm. It carries out the reaction ATP + H2O = ADP + phosphate + H(+). The RuvA-RuvB-RuvC complex processes Holliday junction (HJ) DNA during genetic recombination and DNA repair, while the RuvA-RuvB complex plays an important role in the rescue of blocked DNA replication forks via replication fork reversal (RFR). RuvA specifically binds to HJ cruciform DNA, conferring on it an open structure. The RuvB hexamer acts as an ATP-dependent pump, pulling dsDNA into and through the RuvAB complex. RuvB forms 2 homohexamers on either side of HJ DNA bound by 1 or 2 RuvA tetramers; 4 subunits per hexamer contact DNA at a time. Coordinated motions by a converter formed by DNA-disengaged RuvB subunits stimulates ATP hydrolysis and nucleotide exchange. Immobilization of the converter enables RuvB to convert the ATP-contained energy into a lever motion, pulling 2 nucleotides of DNA out of the RuvA tetramer per ATP hydrolyzed, thus driving DNA branch migration. The RuvB motors rotate together with the DNA substrate, which together with the progressing nucleotide cycle form the mechanistic basis for DNA recombination by continuous HJ branch migration. Branch migration allows RuvC to scan DNA until it finds its consensus sequence, where it cleaves and resolves cruciform DNA. This is Holliday junction branch migration complex subunit RuvB from Caulobacter vibrioides (strain ATCC 19089 / CIP 103742 / CB 15) (Caulobacter crescentus).